A 131-amino-acid chain; its full sequence is Agouti-signaling protein (131 aa).

The N-terminal stretch at 1–22 (MDVTRLLLATLVGFLCFLTVHS) is a signal peptide. N-linked (GlcNAc...) asparagine glycosylation is present at asparagine 39. Residues 58 to 96 (KSKKISRKEAEKRKRSSKKKASIKKVARPPPPSPCVATR) form a disordered region. The segment covering 70-84 (RKRSSKKKASIKKVA) has biased composition (basic residues). 5 disulfides stabilise this stretch: cysteine 92/cysteine 107, cysteine 99/cysteine 113, cysteine 106/cysteine 124, cysteine 110/cysteine 131, and cysteine 115/cysteine 122. In terms of domain architecture, Agouti spans 92 to 131 (CVATRDSCKPPAPACCNPCASCQCRFFGSACTCRVLNPNC).

Its subcellular location is the secreted. Its function is as follows. Involved in the regulation of melanogenesis. The binding of ASP to MC1R precludes alpha-MSH initiated signaling and thus blocks production of cAMP, leading to a down-regulation of eumelanogenesis (brown/black pigment) and thus increasing synthesis of pheomelanin (yellow/red pigment). This is Agouti-signaling protein from Rattus norvegicus (Rat).